Here is a 429-residue protein sequence, read N- to C-terminus: Glutamate-1-semialdehyde 2,1-aminomutase 2 (429 aa).

Lys-268 carries the post-translational modification N6-(pyridoxal phosphate)lysine.

It belongs to the class-III pyridoxal-phosphate-dependent aminotransferase family. HemL subfamily. In terms of assembly, homodimer. Requires pyridoxal 5'-phosphate as cofactor.

Its subcellular location is the cytoplasm. It catalyses the reaction (S)-4-amino-5-oxopentanoate = 5-aminolevulinate. It participates in porphyrin-containing compound metabolism; protoporphyrin-IX biosynthesis; 5-aminolevulinate from L-glutamyl-tRNA(Glu): step 2/2. The chain is Glutamate-1-semialdehyde 2,1-aminomutase 2 from Staphylococcus aureus (strain Mu50 / ATCC 700699).